Here is a 317-residue protein sequence, read N- to C-terminus: Putative 2-hydroxyacid dehydrogenase SA2098 (317 aa).

NAD(+) is bound by residues 155–156 (EI), 234–236 (ASR), and Asp-260. Residue Arg-236 is part of the active site. The active site involves Glu-265. His-283 functions as the Proton donor in the catalytic mechanism. Position 283 to 286 (283 to 286 (HIGN)) interacts with NAD(+).

This sequence belongs to the D-isomer specific 2-hydroxyacid dehydrogenase family.

This chain is Putative 2-hydroxyacid dehydrogenase SA2098, found in Staphylococcus aureus (strain N315).